A 421-amino-acid chain; its full sequence is Glutamate-1-semialdehyde 2,1-aminomutase (421 aa).

Position 261 is an N6-(pyridoxal phosphate)lysine (Lys261).

This sequence belongs to the class-III pyridoxal-phosphate-dependent aminotransferase family. HemL subfamily. It depends on pyridoxal 5'-phosphate as a cofactor.

The protein localises to the cytoplasm. It carries out the reaction (S)-4-amino-5-oxopentanoate = 5-aminolevulinate. It participates in porphyrin-containing compound metabolism; protoporphyrin-IX biosynthesis; 5-aminolevulinate from L-glutamyl-tRNA(Glu): step 2/2. This chain is Glutamate-1-semialdehyde 2,1-aminomutase (hemL), found in Thermoplasma acidophilum (strain ATCC 25905 / DSM 1728 / JCM 9062 / NBRC 15155 / AMRC-C165).